A 188-amino-acid chain; its full sequence is UPF0301 protein Smlt1098 (188 aa).

The protein belongs to the UPF0301 (AlgH) family.

The sequence is that of UPF0301 protein Smlt1098 from Stenotrophomonas maltophilia (strain K279a).